Here is a 566-residue protein sequence, read N- to C-terminus: ATP-dependent RNA helicase DBP3 (566 aa).

The interval 1-139 is disordered; it reads MSAGKKHARD…TTPNGSAQRN (139 aa). Positions 39–58 are enriched in basic residues; the sequence is DKKKKDKKDKKERKEKKEKK. Basic and acidic residues predominate over residues 81-91; the sequence is SEPKPEKEKKE. The span at 92–102 shows a compositional bias: basic residues; sequence KNNKKDKKDKK. Residues 127–139 show a composition bias toward polar residues; sequence AATTTPNGSAQRN. Residues 182 to 209 carry the Q motif motif; the sequence is IHFSHLPTSTLTSKKPFASFTAPTPIQA. One can recognise a Helicase ATP-binding domain in the interval 212 to 396; it reads WPFALSGRDV…EGFMIDPVKA (185 aa). 225 to 232 is an ATP binding site; it reads AETGSGKT. The short motif at 342 to 345 is the DEAD box element; the sequence is DEAD. The 134-residue stretch at 433 to 566 folds into the Helicase C-terminal domain; sequence GKEQRLLELL…TEHDKSHSGS (134 aa).

This sequence belongs to the DEAD box helicase family. DDX5/DBP2 subfamily.

The protein localises to the nucleus. It localises to the nucleolus. The enzyme catalyses ATP + H2O = ADP + phosphate + H(+). In terms of biological role, ATP-dependent RNA helicase required for 60S ribosomal subunit synthesis. Involved in efficient pre-rRNA processing, predominantly at site A3, which is necessary for the normal formation of 25S and 5.8S rRNAs. This Chaetomium globosum (strain ATCC 6205 / CBS 148.51 / DSM 1962 / NBRC 6347 / NRRL 1970) (Soil fungus) protein is ATP-dependent RNA helicase DBP3 (DBP3).